The sequence spans 157 residues: Ribosomal RNA large subunit methyltransferase H (157 aa).

S-adenosyl-L-methionine contacts are provided by residues Leu-73, Gly-105, and 124–129 (LSQMTF).

This sequence belongs to the RNA methyltransferase RlmH family. As to quaternary structure, homodimer.

The protein localises to the cytoplasm. It carries out the reaction pseudouridine(1915) in 23S rRNA + S-adenosyl-L-methionine = N(3)-methylpseudouridine(1915) in 23S rRNA + S-adenosyl-L-homocysteine + H(+). In terms of biological role, specifically methylates the pseudouridine at position 1915 (m3Psi1915) in 23S rRNA. This chain is Ribosomal RNA large subunit methyltransferase H, found in Flavobacterium psychrophilum (strain ATCC 49511 / DSM 21280 / CIP 103535 / JIP02/86).